Consider the following 67-residue polypeptide: Probable Sec-independent protein translocase protein TatE (67 aa).

The chain crosses the membrane as a helical span at residues 1–21; it reads MEGISLAKLLIVGALIVLLFG. Residues 43-67 are disordered; sequence MNDDSDATSKTASEDKNAGQAVHKE. Basic and acidic residues predominate over residues 54–67; that stretch reads ASEDKNAGQAVHKE.

This sequence belongs to the TatA/E family. TatE subfamily.

It localises to the cell inner membrane. In terms of biological role, part of the twin-arginine translocation (Tat) system that transports large folded proteins containing a characteristic twin-arginine motif in their signal peptide across membranes. TatE shares overlapping functions with TatA. In Erwinia tasmaniensis (strain DSM 17950 / CFBP 7177 / CIP 109463 / NCPPB 4357 / Et1/99), this protein is Probable Sec-independent protein translocase protein TatE.